A 189-amino-acid chain; its full sequence is EELFCRTMHGVIKNIAHLCKRDRSKTWGKEGWKKVVVCIVSDGRQKINSRTLSVIAAMGRHQDGIAKNVVNKKPVTAHIYEYTTQITVTPSMKIEGAERGTMPVQLIFCLKEKNQKKINSHRWFFNAFGPILQPNVCVLLDVGTMPGPTSIYHLWKAFDINSNVGGACGEIVALKGKWGLNLLNPLVAA.

Belongs to the chitin synthase family.

It localises to the cell membrane. The catalysed reaction is [(1-&gt;4)-N-acetyl-beta-D-glucosaminyl](n) + UDP-N-acetyl-alpha-D-glucosamine = [(1-&gt;4)-N-acetyl-beta-D-glucosaminyl](n+1) + UDP + H(+). In terms of biological role, polymerizes chitin, a structural polymer of the cell wall and septum, by transferring the sugar moiety of UDP-GlcNAc to the non-reducing end of the growing chitin polymer. This Schizophyllum commune (Split gill fungus) protein is Chitin synthase 1 (CHS1).